A 158-amino-acid chain; its full sequence is MIVIGFDPGTAITGYGILNKEDDKIAVIEYGALTTPSNWSIGRRLNYLFDQVSSLLDLYNPDAVVMEEVFFNKNIKTAISIGQAQGVIILAAQQHQREVSILTPLEVKLSVVGYGRATKDQVQYMVKEVLKLKDIPKPDDVADALALCISYIYKQEGC.

Residues Asp-7, Glu-67, and Asp-140 contribute to the active site. Residues Asp-7, Glu-67, and Asp-140 each contribute to the Mg(2+) site.

This sequence belongs to the RuvC family. As to quaternary structure, homodimer which binds Holliday junction (HJ) DNA. The HJ becomes 2-fold symmetrical on binding to RuvC with unstacked arms; it has a different conformation from HJ DNA in complex with RuvA. In the full resolvosome a probable DNA-RuvA(4)-RuvB(12)-RuvC(2) complex forms which resolves the HJ. Requires Mg(2+) as cofactor.

The protein localises to the cytoplasm. The enzyme catalyses Endonucleolytic cleavage at a junction such as a reciprocal single-stranded crossover between two homologous DNA duplexes (Holliday junction).. Its function is as follows. The RuvA-RuvB-RuvC complex processes Holliday junction (HJ) DNA during genetic recombination and DNA repair. Endonuclease that resolves HJ intermediates. Cleaves cruciform DNA by making single-stranded nicks across the HJ at symmetrical positions within the homologous arms, yielding a 5'-phosphate and a 3'-hydroxyl group; requires a central core of homology in the junction. The consensus cleavage sequence is 5'-(A/T)TT(C/G)-3'. Cleavage occurs on the 3'-side of the TT dinucleotide at the point of strand exchange. HJ branch migration catalyzed by RuvA-RuvB allows RuvC to scan DNA until it finds its consensus sequence, where it cleaves and resolves the cruciform DNA. The sequence is that of Crossover junction endodeoxyribonuclease RuvC from Dictyoglomus thermophilum (strain ATCC 35947 / DSM 3960 / H-6-12).